Consider the following 178-residue polypeptide: MKNWISSFILVHQEKSISFNTNILETNLINIIILLIILFYFLKGLLKDNLSSRQENILSTIQNSENRINEANERLVDAKLQWSQAQITLEELKNQTLQNKLILFNAEFEIKNQVLSQHFNNLLMTLYYREQQAFNNIKKQVSELALKKVIAKLQAPLMEEDQSVIIINKIHRLGGNLE.

Residues 26-46 (TNLINIIILLIILFYFLKGLL) form a helical membrane-spanning segment.

Belongs to the ATPase B chain family. F-type ATPases have 2 components, F(1) - the catalytic core - and F(0) - the membrane proton channel. F(1) has five subunits: alpha(3), beta(3), gamma(1), delta(1), epsilon(1). F(0) has four main subunits: a(1), b(1), b'(1) and c(10-14). The alpha and beta chains form an alternating ring which encloses part of the gamma chain. F(1) is attached to F(0) by a central stalk formed by the gamma and epsilon chains, while a peripheral stalk is formed by the delta, b and b' chains.

It localises to the plastid. The protein localises to the chloroplast thylakoid membrane. F(1)F(0) ATP synthase produces ATP from ADP in the presence of a proton or sodium gradient. F-type ATPases consist of two structural domains, F(1) containing the extramembraneous catalytic core and F(0) containing the membrane proton channel, linked together by a central stalk and a peripheral stalk. During catalysis, ATP synthesis in the catalytic domain of F(1) is coupled via a rotary mechanism of the central stalk subunits to proton translocation. In terms of biological role, component of the F(0) channel, it forms part of the peripheral stalk, linking F(1) to F(0). The chain is ATP synthase subunit b, chloroplastic from Vaucheria litorea (Yellow-green alga).